The following is a 203-amino-acid chain: Small ribosomal subunit protein uS4 (203 aa).

Residues 93 to 156 (RRLDNVVYRL…AKVPAILEAV (64 aa)) form the S4 RNA-binding domain.

This sequence belongs to the universal ribosomal protein uS4 family. Part of the 30S ribosomal subunit. Contacts protein S5. The interaction surface between S4 and S5 is involved in control of translational fidelity.

One of the primary rRNA binding proteins, it binds directly to 16S rRNA where it nucleates assembly of the body of the 30S subunit. Functionally, with S5 and S12 plays an important role in translational accuracy. This chain is Small ribosomal subunit protein uS4, found in Streptococcus mutans serotype c (strain ATCC 700610 / UA159).